Consider the following 296-residue polypeptide: Xyloglucan endotransglucosylase/hydrolase 1 (296 aa).

An N-terminal signal peptide occupies residues 1–23 (MGSSSSMWTVCVILASLASAALC). The 199-residue stretch at 24–222 (ANPRRPVDVQ…WSKAPFIAAY (199 aa)) folds into the GH16 domain. Residue Glu-108 is the Nucleophile of the active site. The active-site Proton donor is Glu-112. Glu-112 contributes to the xyloglucan binding site. Asn-116 carries N-linked (GlcNAc...) asparagine glycosylation. Xyloglucan-binding positions include 125–127 (QTN), 135–137 (DRE), 201–202 (DW), and Gly-206. Intrachain disulfides connect Cys-230/Cys-239 and Cys-276/Cys-290. Arg-281 serves as a coordination point for xyloglucan.

This sequence belongs to the glycosyl hydrolase 16 family. XTH group 1 subfamily. In terms of processing, contains at least one intrachain disulfide bond essential for its enzymatic activity. N-glycosylated; not essential for its enzymatic activity.

Its subcellular location is the secreted. It is found in the cell wall. The protein localises to the extracellular space. The protein resides in the apoplast. It carries out the reaction breaks a beta-(1-&gt;4) bond in the backbone of a xyloglucan and transfers the xyloglucanyl segment on to O-4 of the non-reducing terminal glucose residue of an acceptor, which can be a xyloglucan or an oligosaccharide of xyloglucan.. Its function is as follows. Catalyzes xyloglucan endohydrolysis (XEH) and/or endotransglycosylation (XET). Cleaves and religates xyloglucan polymers, an essential constituent of the primary cell wall, and thereby participates in cell wall construction of growing tissues. In Glycine max (Soybean), this protein is Xyloglucan endotransglucosylase/hydrolase 1.